The primary structure comprises 167 residues: T-cell surface glycoprotein CD3 delta chain (167 aa).

The first 21 residues, 1 to 21, serve as a signal peptide directing secretion; it reads MEHSRCLSCLILAALLSQVNP. At 22 to 100 the chain is on the extracellular side; that stretch reads RALEVLEAED…NCVELDSATL (79 aa). C37 and C73 are disulfide-bonded. N38 and N55 each carry an N-linked (GlcNAc...) asparagine glycan. A helical membrane pass occupies residues 101-121; sequence AGLIITDIIATVLLALGVYCF. The Cytoplasmic portion of the chain corresponds to 122–167; sequence AGHETGRFSRAADTQVLMGNDQLYQPLRERNDAQYSRLGDKWARNK. One can recognise an ITAM domain in the interval 134 to 162; sequence DTQVLMGNDQLYQPLRERNDAQYSRLGDK. A phosphotyrosine mark is found at Y145 and Y156.

The TCR-CD3 complex is composed of a CD3D/CD3E and a CD3G/CD3E heterodimers that preferentially associate with TCRalpha and TCRbeta, respectively, to form TCRalpha/CD3E/CD3G and TCRbeta/CD3G/CD3E trimers. In turn, the hexamer interacts with CD3Z homodimer to form the TCR-CD3 complex. Alternatively, TCRalpha and TCRbeta can be replaced by TCRgamma and TCRdelta. Interacts with coreceptors CD4 and CD8. Post-translationally, phosphorylated on Tyr residues after T-cell receptor triggering by LCK in association with CD4/CD8. As to expression, CD3D is mostly present on T-lymphocytes with its TCR-CD3 partners. Present also in fetal NK-cells.

It localises to the cell membrane. Functionally, part of the TCR-CD3 complex present on T-lymphocyte cell surface that plays an essential role in adaptive immune response. When antigen presenting cells (APCs) activate T-cell receptor (TCR), TCR-mediated signals are transmitted across the cell membrane by the CD3 chains CD3D, CD3E, CD3G and CD3Z. All CD3 chains contain immunoreceptor tyrosine-based activation motifs (ITAMs) in their cytoplasmic domain. Upon TCR engagement, these motifs become phosphorylated by Src family protein tyrosine kinases LCK and FYN, resulting in the activation of downstream signaling pathways. In addition of this role of signal transduction in T-cell activation, CD3D plays an essential role in thymocyte differentiation. Indeed, participates in correct intracellular TCR-CD3 complex assembly and surface expression. In absence of a functional TCR-CD3 complex, thymocytes are unable to differentiate properly. Interacts with CD4 and CD8 and thus serves to establish a functional link between the TCR and coreceptors CD4 and CD8, which is needed for activation and positive selection of CD4 or CD8 T-cells. The sequence is that of T-cell surface glycoprotein CD3 delta chain (CD3D) from Ovis aries (Sheep).